A 469-amino-acid chain; its full sequence is Ufm1-specific protease 2 (469 aa).

Methionine 1 is modified (N-acetylmethionine). Active-site residues include cysteine 302, aspartate 426, and histidine 428.

Belongs to the peptidase C78 family.

The protein resides in the endoplasmic reticulum. It is found in the cytoplasm. Its subcellular location is the nucleus. Functionally, thiol-dependent isopeptidase that specifically cleaves UFM1, a ubiquitin-like modifier protein, from conjugated proteins, such as CD274/PD-L1, CYB5R3, DDRGK1, MRE11, RPL26/uL24, TRIP4 and RPL26/uL24. While it is also able to mediate the processing of UFM1 precursors, a prerequisite for conjugation reactions, UFSP2 mainly acts as a protein deUFMylase that mediates deconjugation of UFM1 from target proteins. Mediates deUFMylation of RPL26/uL24, a critical step to release the UFM1 ribosome E3 ligase (UREL) complex during the recycling of 60S ribosome subunits from the endoplasmic reticulum. Catalyzes deUFMylation of TRIP4, regulating intracellular nuclear receptors transactivation and thereby regulate cell proliferation and differentiation. The sequence is that of Ufm1-specific protease 2 from Pongo abelii (Sumatran orangutan).